Reading from the N-terminus, the 161-residue chain is Assembly protein P7 (161 aa).

Homodimer. Part of the packaging complex composed of RDRP, P4 and P7. Interacts with RDRP.

Its subcellular location is the virion. Its function is as follows. Assembly protein part of the packaging complex that packages the viral RNA segments, replicate them into a double-stranded form and transcribe them. Required for efficient procapsid assembly. Necessary for stable packaging. May stabilize the RNA-dependent RNA polymerase (RdRP) in its position at the three-fold axis on the inner side of empty-unexpanded procapsids. Could play a role in viral RNA recognition. Seems to be involved in the regulation of plus strand synthesis (transcription) as a fidelity factor. In Pseudomonas phage phi6 (Bacteriophage phi-6), this protein is Assembly protein P7 (P7).